Reading from the N-terminus, the 152-residue chain is Anaerobic nitrite reductase HBI (152 aa).

The Globin domain occupies 2–151 (ALTEKQEALL…LVATIKAEMK (150 aa)). Residues 35-39 (EAAPE) carry the Homodimerization motif. 5 residues coordinate heme b: S45, K59, H63, R93, and H98. Residues 105–117 (DPHFEVMKGALLG) carry the Homodimerization motif.

The protein belongs to the plant globin family. In terms of assembly, homodimer. The cofactor is heme b. As to expression, root nodules.

It is found in the cytoplasm. The protein localises to the nucleus. It carries out the reaction Fe(III)-heme b-[protein] + nitric oxide + H2O = Fe(II)-heme b-[protein] + nitrite + 2 H(+). Its function is as follows. Phytoglobin that reduces nitrite to nitric oxide (NO) under anoxic conditions (e.g. during flooding or in waterlogged soil) and upon root nodulation. Required for general plant development and during nodulation, especially for the onset of symbiosis. Monitors nitric oxide (NO) levels during early phase of the nitrogen-fixing symbiosis and buffers oxygen in functioning nodules. May not function as an oxygen storage or transport protein. Has an unusually high affinity for O(2) through a hexacoordinate heme iron because of a very low dissociation constant. This Casuarina glauca (Swamp oak) protein is Anaerobic nitrite reductase HBI.